The primary structure comprises 115 residues: Small ribosomal subunit protein uS14m (115 aa).

This sequence belongs to the universal ribosomal protein uS14 family. In terms of assembly, component of the mitochondrial small ribosomal subunit (mt-SSU). Mature yeast 74S mitochondrial ribosomes consist of a small (37S) and a large (54S) subunit. The 37S small subunit contains a 15S ribosomal RNA (15S mt-rRNA) and 34 different proteins. The 54S large subunit contains a 21S rRNA (21S mt-rRNA) and 46 different proteins.

It is found in the mitochondrion. Its function is as follows. Component of the mitochondrial ribosome (mitoribosome), a dedicated translation machinery responsible for the synthesis of mitochondrial genome-encoded proteins, including at least some of the essential transmembrane subunits of the mitochondrial respiratory chain. The mitoribosomes are attached to the mitochondrial inner membrane and translation products are cotranslationally integrated into the membrane. This Saccharomyces cerevisiae (strain ATCC 204508 / S288c) (Baker's yeast) protein is Small ribosomal subunit protein uS14m (MRP2).